The sequence spans 262 residues: Pyridoxine 5'-phosphate synthase (262 aa).

Asparagine 6 is a binding site for 3-amino-2-oxopropyl phosphate. Residue 8–9 (DH) coordinates 1-deoxy-D-xylulose 5-phosphate. A 3-amino-2-oxopropyl phosphate-binding site is contributed by arginine 17. Histidine 43 serves as the catalytic Proton acceptor. Arginine 45 and histidine 50 together coordinate 1-deoxy-D-xylulose 5-phosphate. Catalysis depends on glutamate 70, which acts as the Proton acceptor. Threonine 102 is a binding site for 1-deoxy-D-xylulose 5-phosphate. Histidine 215 acts as the Proton donor in catalysis. Residues glycine 216 and 237 to 238 (GH) each bind 3-amino-2-oxopropyl phosphate.

The protein belongs to the PNP synthase family. Homooctamer; tetramer of dimers.

Its subcellular location is the cytoplasm. The catalysed reaction is 3-amino-2-oxopropyl phosphate + 1-deoxy-D-xylulose 5-phosphate = pyridoxine 5'-phosphate + phosphate + 2 H2O + H(+). It participates in cofactor biosynthesis; pyridoxine 5'-phosphate biosynthesis; pyridoxine 5'-phosphate from D-erythrose 4-phosphate: step 5/5. Its function is as follows. Catalyzes the complicated ring closure reaction between the two acyclic compounds 1-deoxy-D-xylulose-5-phosphate (DXP) and 3-amino-2-oxopropyl phosphate (1-amino-acetone-3-phosphate or AAP) to form pyridoxine 5'-phosphate (PNP) and inorganic phosphate. The protein is Pyridoxine 5'-phosphate synthase of Helicobacter pylori (strain Shi470).